The sequence spans 1207 residues: Histidine kinase 1 (1207 aa).

The segment covering 1-10 (MRGDSFSMSI) has biased composition (polar residues). Positions 1-20 (MRGDSFSMSIENLPDSPMGS) are disordered. Over 1 to 81 (MRGDSFSMSI…SSYYSVFVVR (81 aa)) the chain is Cytoplasmic. A helical transmembrane segment spans residues 82 to 102 (LAIMVMLAILIGLLTVLTWHF). Over 103–446 (TRIYTKQSLQ…GKVDERAFKT (344 aa)) the chain is Extracellular. Residues 447 to 467 (LIILISASVCIFFIGCVCILI) form a helical membrane-spanning segment. At 468–1207 (LTNGVSKEMK…PSAFQTSLSA (740 aa)) the chain is on the cytoplasmic side. Residues 505–763 (NMSHELRTPM…LMRLYLILST (259 aa)) enclose the Histidine kinase domain. Position 508 is a phosphohistidine; by autocatalysis (His-508). 2 disordered regions span residues 964–987 (DTCS…VKPS) and 1000–1021 (DATT…PEEE). The segment covering 975-984 (SGEKQVDKSV) has biased composition (basic and acidic residues). Low complexity predominate over residues 1000 to 1014 (DATTSNDDSTSASMT). The region spanning 1045–1196 (RILLAEDTPV…LMVSTILSLT (152 aa)) is the Response regulatory domain. 4-aspartylphosphate is present on Asp-1127.

In terms of assembly, interacts with AHP2, depending of the phosphorylation state of Asp-1075 in the receiver domain, but probably not with AHP1 and AHP3. Autophosphorylated predominantly on His residues. Activation probably requires a transfer of a phosphate group between a His in the transmitter domain and an Asp of the receiver domain. In terms of tissue distribution, mostly expressed in roots, and, to a lower extent, in stems, leaves and flowers.

The protein resides in the cell membrane. It carries out the reaction ATP + protein L-histidine = ADP + protein N-phospho-L-histidine.. In terms of biological role, functions as an osmosensor histidine kinase that detects water stress and transmits the stress signal to a downstream MAPK cascade. This protein undergoes an ATP-dependent autophosphorylation at a conserved histidine residue in the kinase core, and a phosphoryl group is then transferred to a conserved aspartate residue in the receiver domain. Positive regulator of drought and salt stress responses, and abscisic acid (ABA) signaling. Confers drought tolerance, probably by regulating levels of ABA accumulation. Plays a redundant role in regulating plant growth and development. Required for the regulation of desiccation processes during seed formation. The protein is Histidine kinase 1 (AHK1) of Arabidopsis thaliana (Mouse-ear cress).